The chain runs to 535 residues: Beta-hexosaminidase 3 (535 aa).

An N-terminal signal peptide occupies residues 1–24 (MRGSGAKIAGVLPLFMLFIAGTIS). The N-linked (GlcNAc...) asparagine glycan is linked to asparagine 92. A disulfide bond links cysteine 292 and cysteine 334. Glutamate 329 functions as the Proton donor in the catalytic mechanism. 4 N-linked (GlcNAc...) asparagine glycosylation sites follow: asparagine 331, asparagine 405, asparagine 441, and asparagine 496. A disulfide bridge links cysteine 506 with cysteine 532.

This sequence belongs to the glycosyl hydrolase 20 family. Post-translationally, N-glycosylated. As to expression, expressed in roots, leaves, stems, flowers and siliques.

The protein resides in the cell membrane. It catalyses the reaction Hydrolysis of terminal non-reducing N-acetyl-D-hexosamine residues in N-acetyl-beta-D-hexosaminides.. Slightly inhibited by N-acetylcastanospermine. Its function is as follows. Has a broad substrate specificity. Can use synthetic substrates such as pyridylaminated chitotriose, p-nitrophenyl-beta-N-acetylglucosaminide, p-nitrophenyl-2-acetamido-2-deoxy-beta-D-glucopyranoside (pNP-GlcNAc), p-nitrophenyl-2-acetamido-2-deoxy-beta-D-galactopyranoside (pNP-GalNAc), 4-methylumbelliferyl-2-acetamido-2-deoxy-beta-D-glucopyranoside (MU-GlcNAc), and 4-methylumbelliferyl-6-sulfo-2-acetamido-2-deoxy-beta-D-glucopyranoside (MU-GlcNAc-6SO(4)) as substrates. Removes terminal GlcNAc residues from alpha1,3- and alpha1,6-mannosyl branches of biantennary N-glycans without any strict branch preference. Required for the presence of paucimannosidic N-glycans in glycoproteins of roots and leaves. The protein is Beta-hexosaminidase 3 (HEXO3) of Arabidopsis thaliana (Mouse-ear cress).